The chain runs to 253 residues: 3-deoxy-manno-octulosonate cytidylyltransferase (253 aa).

The protein belongs to the KdsB family.

The protein localises to the cytoplasm. It catalyses the reaction 3-deoxy-alpha-D-manno-oct-2-ulosonate + CTP = CMP-3-deoxy-beta-D-manno-octulosonate + diphosphate. Its pathway is nucleotide-sugar biosynthesis; CMP-3-deoxy-D-manno-octulosonate biosynthesis; CMP-3-deoxy-D-manno-octulosonate from 3-deoxy-D-manno-octulosonate and CTP: step 1/1. It functions in the pathway bacterial outer membrane biogenesis; lipopolysaccharide biosynthesis. Activates KDO (a required 8-carbon sugar) for incorporation into bacterial lipopolysaccharide in Gram-negative bacteria. This is 3-deoxy-manno-octulosonate cytidylyltransferase from Proteus mirabilis (strain HI4320).